Reading from the N-terminus, the 607-residue chain is Chaperone protein dnaK (607 aa).

The segment covering 579 to 591 (KASETSNAKTNGK) has biased composition (polar residues). The interval 579–607 (KASETSNAKTNGKASEKEDVIDADFKAQE) is disordered. Residues 592–607 (ASEKEDVIDADFKAQE) are compositionally biased toward basic and acidic residues.

It belongs to the heat shock protein 70 family.

Its subcellular location is the plastid. The protein resides in the chloroplast. In terms of biological role, acts as a chaperone. The polypeptide is Chaperone protein dnaK (Cyanidioschyzon merolae (strain NIES-3377 / 10D) (Unicellular red alga)).